The chain runs to 207 residues: uncharacterized protein (207 aa).

It belongs to the flavoredoxin family. FMN serves as cofactor.

This is an uncharacterized protein from Bacillus subtilis (strain 168).